A 335-amino-acid chain; its full sequence is Glycerol-3-phosphate dehydrogenase [NAD(P)+] (335 aa).

NADPH-binding residues include Ser-12, Trp-13, and Lys-107. The sn-glycerol 3-phosphate site is built by Lys-107, Gly-138, and Ser-140. Position 142 (Ala-142) interacts with NADPH. 5 residues coordinate sn-glycerol 3-phosphate: Lys-193, Asp-246, Ser-256, Arg-257, and Asn-258. The active-site Proton acceptor is Lys-193. NADPH is bound at residue Arg-257. NADPH contacts are provided by Val-281 and Glu-283.

Belongs to the NAD-dependent glycerol-3-phosphate dehydrogenase family.

It localises to the cytoplasm. It catalyses the reaction sn-glycerol 3-phosphate + NAD(+) = dihydroxyacetone phosphate + NADH + H(+). It carries out the reaction sn-glycerol 3-phosphate + NADP(+) = dihydroxyacetone phosphate + NADPH + H(+). Its pathway is membrane lipid metabolism; glycerophospholipid metabolism. In terms of biological role, catalyzes the reduction of the glycolytic intermediate dihydroxyacetone phosphate (DHAP) to sn-glycerol 3-phosphate (G3P), the key precursor for phospholipid synthesis. This chain is Glycerol-3-phosphate dehydrogenase [NAD(P)+], found in Citrifermentans bemidjiense (strain ATCC BAA-1014 / DSM 16622 / JCM 12645 / Bem) (Geobacter bemidjiensis).